A 128-amino-acid chain; its full sequence is UPF0325 protein YaeH (128 aa).

This sequence belongs to the UPF0325 family.

This is UPF0325 protein YaeH from Salmonella agona (strain SL483).